Consider the following 831-residue polypeptide: Translation initiation factor IF-2 (831 aa).

The region spanning T329–K499 is the tr-type G domain. Residues G338–T345 form a G1 region. G338–T345 serves as a coordination point for GTP. Positions G363 to H367 are G2. Residues D385 to G388 are G3. GTP-binding positions include D385–H389 and N439–D442. Residues N439–D442 are G4. A G5 region spans residues S475–L477.

This sequence belongs to the TRAFAC class translation factor GTPase superfamily. Classic translation factor GTPase family. IF-2 subfamily.

Its subcellular location is the cytoplasm. In terms of biological role, one of the essential components for the initiation of protein synthesis. Protects formylmethionyl-tRNA from spontaneous hydrolysis and promotes its binding to the 30S ribosomal subunits. Also involved in the hydrolysis of GTP during the formation of the 70S ribosomal complex. The sequence is that of Translation initiation factor IF-2 (infB) from Rickettsia prowazekii (strain Madrid E).